Reading from the N-terminus, the 303-residue chain is Probable acetylxylan esterase A (303 aa).

A signal peptide spans 1–23 (MLSTHLLFLATTLLTSLFHPIAA). Ser-147 serves as the catalytic Charge relay system. Asn-189 carries an N-linked (GlcNAc...) asparagine glycan.

Belongs to the carbohydrate esterase 1 (CE1) family. AxeA subfamily. As to quaternary structure, monomer.

It is found in the secreted. The enzyme catalyses Deacetylation of xylans and xylo-oligosaccharides.. It functions in the pathway glycan degradation; xylan degradation. Acetylxylan esterase involved in the hydrolysis of xylan, a major structural heterogeneous polysaccharide found in plant biomass representing the second most abundant polysaccharide in the biosphere, after cellulose. Degrades acetylated xylans by cleaving acetyl side groups from the hetero-xylan backbone. The chain is Probable acetylxylan esterase A (axeA) from Aspergillus niger (strain ATCC MYA-4892 / CBS 513.88 / FGSC A1513).